A 406-amino-acid polypeptide reads, in one-letter code: uncharacterized protein (406 aa).

The disordered stretch occupies residues 1–36 (MDRVRSLIGNRRGRRHNRQHPPYPHSGSPSTVNLLG).

To yeast YMR316w.

This is an uncharacterized protein from Saccharomyces cerevisiae (strain ATCC 204508 / S288c) (Baker's yeast).